A 469-amino-acid chain; its full sequence is uncharacterized protein (469 aa).

This is an uncharacterized protein from Methanocaldococcus jannaschii (strain ATCC 43067 / DSM 2661 / JAL-1 / JCM 10045 / NBRC 100440) (Methanococcus jannaschii).